The sequence spans 455 residues: N-acetyl-S-(2-succino)cysteine lyase (455 aa).

106–107 (TT) is a binding site for fumarate. The active-site Proton donor/acceptor is His-154. Residue Arg-233 coordinates fumarate. Ser-277 acts as the Proton donor/acceptor in catalysis. Residues Ser-278 and 283-285 (KRN) each bind fumarate.

Belongs to the lyase 1 family.

The enzyme catalyses N-acetyl-S-(2-succino)-L-cysteine = N-acetyl-L-cysteine + fumarate. It participates in amino-acid biosynthesis; L-cysteine biosynthesis. Catalyzes the cleavage of N-acetyl-S-(2-succino)cysteine into fumarate and N-acetylcysteine. Is involved in a S-(2-succino)cysteine (2SC) degradation pathway that allows the bacterium to recover cysteine from 2SC and to detoxify 2SC that may be a toxic metabolite. Can also perform the reverse reaction in vitro, and has minor activity against 2SC and other small molecule thiols. This Enterococcus italicus (strain DSM 15952 / CCUG 50447 / LMG 22039 / TP 1.5) protein is N-acetyl-S-(2-succino)cysteine lyase.